We begin with the raw amino-acid sequence, 281 residues long: NAD kinase (281 aa).

The Proton acceptor role is filled by aspartate 66. NAD(+)-binding positions include 66-67 (DG), 137-138 (ND), arginine 148, arginine 165, aspartate 167, and 178-183 (TAYSMS).

The protein belongs to the NAD kinase family. The cofactor is a divalent metal cation.

It localises to the cytoplasm. It carries out the reaction NAD(+) + ATP = ADP + NADP(+) + H(+). Functionally, involved in the regulation of the intracellular balance of NAD and NADP, and is a key enzyme in the biosynthesis of NADP. Catalyzes specifically the phosphorylation on 2'-hydroxyl of the adenosine moiety of NAD to yield NADP. In Chlorobium phaeovibrioides (strain DSM 265 / 1930) (Prosthecochloris vibrioformis (strain DSM 265)), this protein is NAD kinase.